The following is a 592-amino-acid chain: Aspartate--tRNA ligase (592 aa).

E173 serves as a coordination point for L-aspartate. The tract at residues 197-200 (QLFK) is aspartate. R219 serves as a coordination point for L-aspartate. ATP is bound by residues 219–221 (RDE) and Q228. An L-aspartate-binding site is contributed by H448. E482 is a binding site for ATP. R489 is an L-aspartate binding site. 534-537 (GLDR) is an ATP binding site.

The protein belongs to the class-II aminoacyl-tRNA synthetase family. Type 1 subfamily. In terms of assembly, homodimer.

It is found in the cytoplasm. It carries out the reaction tRNA(Asp) + L-aspartate + ATP = L-aspartyl-tRNA(Asp) + AMP + diphosphate. Functionally, catalyzes the attachment of L-aspartate to tRNA(Asp) in a two-step reaction: L-aspartate is first activated by ATP to form Asp-AMP and then transferred to the acceptor end of tRNA(Asp). The protein is Aspartate--tRNA ligase of Shewanella baltica (strain OS155 / ATCC BAA-1091).